Reading from the N-terminus, the 263-residue chain is Probable ribosomal RNA small subunit methyltransferase A (263 aa).

Positions 12, 37, 58, 83, and 100 each coordinate S-adenosyl-L-methionine.

The protein belongs to the class I-like SAM-binding methyltransferase superfamily. rRNA adenine N(6)-methyltransferase family. RsmA subfamily.

The protein localises to the cytoplasm. Its function is as follows. Specifically dimethylates two adjacent adenosines in the loop of a conserved hairpin near the 3'-end of 16S rRNA in the 30S particle. May play a critical role in biogenesis of 30S subunits. This Methanococcus maripaludis (strain C5 / ATCC BAA-1333) protein is Probable ribosomal RNA small subunit methyltransferase A.